The sequence spans 37 residues: Large ribosomal subunit protein bL36c (37 aa).

Belongs to the bacterial ribosomal protein bL36 family.

It localises to the plastid. The protein resides in the chloroplast. The sequence is that of Large ribosomal subunit protein bL36c from Stigeoclonium helveticum (Green alga).